We begin with the raw amino-acid sequence, 491 residues long: Cytochrome P450 81F2 (491 aa).

Residues 283–303 (VIIKGLMLSMMLAGTDTAAVT) form a helical membrane-spanning segment. Position 429 (C429) interacts with heme.

This sequence belongs to the cytochrome P450 family. Heme is required as a cofactor.

It localises to the membrane. It functions in the pathway secondary metabolite biosynthesis. Functionally, involved in indole glucosinolate biosynthesis. Catalyzes hydroxylation reactions of the glucosinolate indole ring. Converts indol-3-yl-methylglucosinolate (I3M) to 4-hydroxy-indol-3-yl-methylglucosinolate (4OH-I3M) and/or 1-hydroxy-indol-3-yl-methylglucosinolate (1OH-I3M) intermediates. These hydroxy intermediates are converted to 4-methoxy-indol-3-yl-methylglucosinolate (4MO-I3M) and 1-methoxy-indol-3-yl-methylglucosinolate (1MO-I3M) by indole glucosinolate methyltransferase 1 and 2 (IGMT1 and IGMT2). Contributes to defense against the green peach aphid (Myzus persicae), a generalist phloem-feeding herbivore. Required for the biosynthesis of antifungal indole glucosinolate metabolites. Required for the pathogen-induced accumulation of 4MO-I3M, which in turn is activated by the atypical BGLU26/PEN2 myrosinase. Required for the biosynthesis of Trp-derived antifungal compounds and non-host resistance to the necrotrophic fungal pathogen Plectosphaerella cucumerina. Required for resistance to the non-adapted fungal pathogen Colletotrichum gloeosporioides. The sequence is that of Cytochrome P450 81F2 from Arabidopsis thaliana (Mouse-ear cress).